Consider the following 522-residue polypeptide: Lysine--tRNA ligase (522 aa).

A 'HIGH' region motif is present at residues 44-52; the sequence is PSGLPHIGT. Residues 290–294 carry the 'KMSKS' region motif; the sequence is KISKS. K293 is an ATP binding site.

This sequence belongs to the class-I aminoacyl-tRNA synthetase family.

The protein localises to the cytoplasm. The enzyme catalyses tRNA(Lys) + L-lysine + ATP = L-lysyl-tRNA(Lys) + AMP + diphosphate. In Rickettsia peacockii (strain Rustic), this protein is Lysine--tRNA ligase.